The following is a 1368-amino-acid chain: Inactive tyrosine-protein kinase PRAG1 (1368 aa).

Residues 200–236 form a disordered region; that stretch reads CLKGPRPCTSPQPLRESLPSEDDSDQRCSPSGDSEGG. Tyrosine 238 carries the post-translational modification Phosphotyrosine; by CSK. The disordered stretch occupies residues 297-330; the sequence is STANPPHLGPKKPSLNSEAASSSDGLSCGSSRSG. The segment covering 317–330 has biased composition (low complexity); the sequence is SSSDGLSCGSSRSG. Residues tyrosine 343 and tyrosine 391 each carry the phosphotyrosine; by CSK modification. Disordered regions lie at residues 392 to 443, 499 to 605, and 636 to 792; these read AESA…PNAA, LSSR…GAWS, and HSNS…KKIV. The span at 414–434 shows a compositional bias: polar residues; sequence VSSGQVWTGDTWSQKTPSGWS. Basic and acidic residues predominate over residues 502–518; that stretch reads RESHPHNMTENSSKEKP. 2 stretches are compositionally biased toward low complexity: residues 522-535 and 550-563; these read PKLS…SPVS and SGSS…SRVP. Composition is skewed to polar residues over residues 564–574 and 652–666; these read TNLTSSCQTNG and SGQN…SKSA. Serine 667 and serine 716 each carry phosphoserine. Polar residues-rich tracts occupy residues 707 to 717 and 725 to 741; these read VSQSSAESLSP and SFTT…SRTC. 2 positions are modified to phosphoserine: serine 753 and serine 797. Disordered regions lie at residues 799–818 and 873–901; these read PDGF…SPKL and NSKG…VSSQ. Positions 887–901 are enriched in low complexity; sequence AATSTSSSQLSVSSQ. Positions 906-949 are required for homodimerization; sequence SSQLQLHSLLSSISSKEGTYAKLGGLYTQSLARLVTKCEDLFMG. Positions 940-1291 constitute a Protein kinase domain; sequence VTKCEDLFMG…EAKRVLQCLL (352 aa). Residues 1134–1144 show a composition bias toward polar residues; that stretch reads SSPGPSANPSV. Residues 1134–1166 are disordered; it reads SSPGPSANPSVPTTTSRCPSAAPAATTACQGGP. Residues 1145 to 1162 are compositionally biased toward low complexity; sequence PTTTSRCPSAAPAATTAC. The segment at 1293–1368 is required for homodimerization; sequence GPRRELVEQP…LQSLKLLQLL (76 aa).

Belongs to the protein kinase superfamily. In terms of assembly, homodimer. Dimerization leads to the catalytic activation of CSK. Interacts (via C-terminus) with RND2. Interacts with CSK (via SH2 domain) in a Tyr-391 phosphorylation-dependent manner; this interaction potentiates kinase activity of CSK. Interacts with NOTCH1 intracellular domain (N1ICD). Forms a complex with N1ICD and MAML1, in a MAML1-dependent manner. Phosphorylated by CSK on Tyr-238, Tyr-343, and Tyr-391; Tyr-391 is a primary site of phosphorylation. Highly-expressed in brain, including cortical and hippocampal pyramidal neurons, as well as in kidney, spleen, colon and small intestine.

It localises to the cytoplasm. It is found in the nucleus. Its subcellular location is the cell junction. The protein resides in the focal adhesion. In terms of biological role, catalytically inactive protein kinase that acts as a scaffold protein. Functions as an effector of the small GTPase RND2, which stimulates RhoA activity and inhibits NGF-induced neurite outgrowth. Promotes Src family kinase (SFK) signallig by regulating the subcellular localization of CSK, a negative regulator of these kinases, leading to the regulation of cell morphology and motility by a CSK-dependent mechanism. Acts as a critical coactivator of Notch signaling. In Rattus norvegicus (Rat), this protein is Inactive tyrosine-protein kinase PRAG1.